Here is a 501-residue protein sequence, read N- to C-terminus: Leukocyte receptor cluster member 9 (501 aa).

Disordered stretches follow at residues 1 to 43 (MGSR…PAPP), 61 to 86 (RQPH…KPPL), 203 to 234 (GQEA…GELE), and 281 to 300 (QALG…WGPA). Residues 40–67 (PAPPPACRFFLEGRCRFGARCRQPHPGA) form a C3H1-type zinc finger.

This is Leukocyte receptor cluster member 9 (LENG9) from Homo sapiens (Human).